The sequence spans 359 residues: Type-1 angiotensin II receptor (359 aa).

The Extracellular portion of the chain corresponds to 1–25; the sequence is MVPNYSTEETVKRIHVDCPVSGRHS. The N-linked (GlcNAc...) asparagine glycan is linked to Asn4. Position 17 (Asp17) interacts with angiotensin II. 2 disulfide bridges follow: Cys18–Cys274 and Cys101–Cys180. Residues 26–55 form a helical membrane-spanning segment; the sequence is YIYIMVPTVYSIIFIIGIFGNSLVVIVIYC. Residues 56-61 lie on the Cytoplasmic side of the membrane; it reads YMKLKT. A helical membrane pass occupies residues 62–89; sequence VASIFLLNLALADLCFLITLPLWAAYTA. Residues 90 to 98 lie on the Extracellular side of the membrane; that stretch reads MEYQWPFGN. A helical transmembrane segment spans residues 99-125; the sequence is CLCKLASAGISFNLYASVFLLTCLSID. The Cytoplasmic portion of the chain corresponds to 126–141; that stretch reads RYLAIVHPVKSRIRRT. The helical transmembrane segment at 142-165 threads the bilayer; that stretch reads MFVARVTCIVIWLLAGVASLPVII. The Extracellular portion of the chain corresponds to 166–190; that stretch reads HRNIFFAENLNMTVCGFRYDNNNTT. Arg167 serves as a coordination point for angiotensin II. N-linked (GlcNAc...) asparagine glycosylation occurs at Asn176. Angiotensin II-binding residues include Phe182 and Tyr184. 2 N-linked (GlcNAc...) asparagine glycosylation sites follow: Asn187 and Asn188. The helical transmembrane segment at 191 to 216 threads the bilayer; that stretch reads LRVGLGLSKNLLGFLIPFLIILTSYT. Angiotensin II is bound at residue Lys199. Residues 217-239 lie on the Cytoplasmic side of the membrane; it reads LIWKTLKKAYQIQRNKTRNDDIF. A helical membrane pass occupies residues 240-268; that stretch reads KMIVAIVFFFFFSWIPHQVFTFLDVLIQL. Topologically, residues 269-278 are extracellular; that stretch reads HVITDCKITD. A helical membrane pass occupies residues 279–304; it reads IVDTAMPFTICIAYFNNCLNPFFYVF. At 305–359 the chain is on the cytoplasmic side; sequence FGKNFKKYFLQLIKYIPPNVSTHPSLTTKMSSLSYRPPENIRLPTKKTAGSFDTE.

This sequence belongs to the G-protein coupled receptor 1 family. C-terminal Ser or Thr residues may be phosphorylated. Adrenal medulla.

Its subcellular location is the cell membrane. Functionally, receptor for angiotensin II, a vasoconstricting peptide, which acts as a key regulator of blood pressure and sodium retention by the kidney. The activated receptor in turn couples to G-alpha proteins G(q) (GNAQ, GNA11, GNA14 or GNA15) and thus activates phospholipase C and increases the cytosolic Ca(2+) concentrations, which in turn triggers cellular responses such as stimulation of protein kinase C. The sequence is that of Type-1 angiotensin II receptor (AGTR1) from Meleagris gallopavo (Wild turkey).